A 341-amino-acid polypeptide reads, in one-letter code: Hygromycin-B 4-O-kinase (341 aa).

The active-site Proton acceptor is the Asp198.

Belongs to the aminoglycoside phosphotransferase family.

It carries out the reaction hygromycin B + ATP = 4-O-phosphohygromycin B + ADP + H(+). The aminoglycoside phosphotransferases achieve inactivation of their antibiotic substrates by phosphorylation. Only phosphorylates hygromycin and closely related compounds such as demethyl analogs and destomycin. The sequence is that of Hygromycin-B 4-O-kinase (hph) from Escherichia coli.